The primary structure comprises 278 residues: 4-diphosphocytidyl-2-C-methyl-D-erythritol kinase (278 aa).

Residue lysine 9 is part of the active site. 89 to 99 (PVASGIGGGSA) contributes to the ATP binding site. The active site involves aspartate 128.

The protein belongs to the GHMP kinase family. IspE subfamily.

It catalyses the reaction 4-CDP-2-C-methyl-D-erythritol + ATP = 4-CDP-2-C-methyl-D-erythritol 2-phosphate + ADP + H(+). Its pathway is isoprenoid biosynthesis; isopentenyl diphosphate biosynthesis via DXP pathway; isopentenyl diphosphate from 1-deoxy-D-xylulose 5-phosphate: step 3/6. Its function is as follows. Catalyzes the phosphorylation of the position 2 hydroxy group of 4-diphosphocytidyl-2C-methyl-D-erythritol. The protein is 4-diphosphocytidyl-2-C-methyl-D-erythritol kinase of Cereibacter sphaeroides (strain ATCC 17025 / ATH 2.4.3) (Rhodobacter sphaeroides).